The primary structure comprises 179 residues: Large ribosomal subunit protein bL19 (179 aa).

The protein belongs to the bacterial ribosomal protein bL19 family.

In terms of biological role, this protein is located at the 30S-50S ribosomal subunit interface and may play a role in the structure and function of the aminoacyl-tRNA binding site. The polypeptide is Large ribosomal subunit protein bL19 (Rhizobium johnstonii (strain DSM 114642 / LMG 32736 / 3841) (Rhizobium leguminosarum bv. viciae)).